The following is a 184-amino-acid chain: Peptide deformylase (184 aa).

C92 and H134 together coordinate Fe cation. The active site involves E135. H138 contacts Fe cation.

Belongs to the polypeptide deformylase family. The cofactor is Fe(2+).

The enzyme catalyses N-terminal N-formyl-L-methionyl-[peptide] + H2O = N-terminal L-methionyl-[peptide] + formate. In terms of biological role, removes the formyl group from the N-terminal Met of newly synthesized proteins. Requires at least a dipeptide for an efficient rate of reaction. N-terminal L-methionine is a prerequisite for activity but the enzyme has broad specificity at other positions. The protein is Peptide deformylase of Psychrobacter arcticus (strain DSM 17307 / VKM B-2377 / 273-4).